The chain runs to 193 residues: Protein GrpE (193 aa).

The segment at 1–26 is disordered; it reads MTKKHHKEQEEIQETIKTEAAEENVG. A compositionally biased stretch (basic and acidic residues) spans 7 to 20; that stretch reads KEQEEIQETIKTEA.

This sequence belongs to the GrpE family. As to quaternary structure, homodimer.

It localises to the cytoplasm. In terms of biological role, participates actively in the response to hyperosmotic and heat shock by preventing the aggregation of stress-denatured proteins, in association with DnaK and GrpE. It is the nucleotide exchange factor for DnaK and may function as a thermosensor. Unfolded proteins bind initially to DnaJ; upon interaction with the DnaJ-bound protein, DnaK hydrolyzes its bound ATP, resulting in the formation of a stable complex. GrpE releases ADP from DnaK; ATP binding to DnaK triggers the release of the substrate protein, thus completing the reaction cycle. Several rounds of ATP-dependent interactions between DnaJ, DnaK and GrpE are required for fully efficient folding. In Chlorobaculum parvum (strain DSM 263 / NCIMB 8327) (Chlorobium vibrioforme subsp. thiosulfatophilum), this protein is Protein GrpE.